The sequence spans 113 residues: Iron-sulfur cluster insertion protein ErpA (113 aa).

Iron-sulfur cluster-binding residues include cysteine 41, cysteine 105, and cysteine 107.

It belongs to the HesB/IscA family. Homodimer. Iron-sulfur cluster is required as a cofactor.

Functionally, required for insertion of 4Fe-4S clusters for at least IspG. The protein is Iron-sulfur cluster insertion protein ErpA of Vibrio parahaemolyticus serotype O3:K6 (strain RIMD 2210633).